We begin with the raw amino-acid sequence, 40 residues long: Beta-glucosidase 1 (40 aa).

It carries out the reaction Hydrolysis of terminal, non-reducing beta-D-glucosyl residues with release of beta-D-glucose.. The chain is Beta-glucosidase 1 from Passalora fulva (Tomato leaf mold).